Here is a 245-residue protein sequence, read N- to C-terminus: Enolase-phosphatase E1 (245 aa).

Belongs to the HAD-like hydrolase superfamily. MasA/MtnC family. In terms of assembly, monomer. It depends on Mg(2+) as a cofactor.

The catalysed reaction is 5-methylsulfanyl-2,3-dioxopentyl phosphate + H2O = 1,2-dihydroxy-5-(methylsulfanyl)pent-1-en-3-one + phosphate. The protein operates within amino-acid biosynthesis; L-methionine biosynthesis via salvage pathway; L-methionine from S-methyl-5-thio-alpha-D-ribose 1-phosphate: step 3/6. It functions in the pathway amino-acid biosynthesis; L-methionine biosynthesis via salvage pathway; L-methionine from S-methyl-5-thio-alpha-D-ribose 1-phosphate: step 4/6. In terms of biological role, bifunctional enzyme that catalyzes the enolization of 2,3-diketo-5-methylthiopentyl-1-phosphate (DK-MTP-1-P) into the intermediate 2-hydroxy-3-keto-5-methylthiopentenyl-1-phosphate (HK-MTPenyl-1-P), which is then dephosphorylated to form the acireductone 1,2-dihydroxy-3-keto-5-methylthiopentene (DHK-MTPene). In Parasynechococcus marenigrum (strain WH8102), this protein is Enolase-phosphatase E1.